The sequence spans 211 residues: Lysozyme g (211 aa).

The N-terminal stretch at 1–26 is a signal peptide; that stretch reads MLGKNDPMCLVLVLLGLTALLGICQG. Disulfide bonds link Cys-30/Cys-86 and Cys-44/Cys-55. Active-site residues include Glu-99 and Asp-112.

Belongs to the glycosyl hydrolase 23 family. Granulocyte compartment of myelomonocytic cells.

Its subcellular location is the secreted. It catalyses the reaction Hydrolysis of (1-&gt;4)-beta-linkages between N-acetylmuramic acid and N-acetyl-D-glucosamine residues in a peptidoglycan and between N-acetyl-D-glucosamine residues in chitodextrins.. In Gallus gallus (Chicken), this protein is Lysozyme g.